A 230-amino-acid polypeptide reads, in one-letter code: Large ribosomal subunit protein uL3 (230 aa).

Disordered regions lie at residues 125–149 (QAIG…SLGD) and 210–230 (PNPK…VKNE).

The protein belongs to the universal ribosomal protein uL3 family. As to quaternary structure, part of the 50S ribosomal subunit. Forms a cluster with proteins L14 and L19.

Its function is as follows. One of the primary rRNA binding proteins, it binds directly near the 3'-end of the 23S rRNA, where it nucleates assembly of the 50S subunit. This is Large ribosomal subunit protein uL3 from Mesomycoplasma hyopneumoniae (strain 232) (Mycoplasma hyopneumoniae).